The following is a 35-amino-acid chain: Potassium channel toxin alpha-KTx 6.12 (35 aa).

Q1 is modified (pyrrolidone carboxylic acid). Intrachain disulfides connect C4–C24, C10–C29, C14–C31, and C19–C34. K35 is subject to Lysine amide.

This sequence belongs to the short scorpion toxin superfamily. Potassium channel inhibitor family. Alpha-KTx 06 subfamily. As to quaternary structure, monomer. In terms of tissue distribution, expressed by the venom gland.

The protein resides in the secreted. Functionally, high affinity blocker of Kv1.3/KCNA3 channels of human T cells. Blocks Kv1.2/KCNA2 with an order of magnitude smaller than for Kv1.3/KCNA3. In Anuroctonus phaiodactylus (Mafia scorpion), this protein is Potassium channel toxin alpha-KTx 6.12.